A 387-amino-acid chain; its full sequence is Homoserine O-succinyltransferase (387 aa).

Residues 49-358 (NAILICHALS…DAEQGHDSFL (310 aa)) form the AB hydrolase-1 domain. Ser156 (nucleophile) is an active-site residue. Position 226 (Arg226) interacts with substrate. Catalysis depends on residues Asp321 and His354. Asp355 contributes to the substrate binding site.

The protein belongs to the AB hydrolase superfamily. MetX family. Homodimer.

The protein resides in the cytoplasm. The catalysed reaction is L-homoserine + succinyl-CoA = O-succinyl-L-homoserine + CoA. It participates in amino-acid biosynthesis; L-methionine biosynthesis via de novo pathway; O-succinyl-L-homoserine from L-homoserine: step 1/1. Requires MetW for activity. Transfers a succinyl group from succinyl-CoA to L-homoserine, forming succinyl-L-homoserine. In Acinetobacter baylyi (strain ATCC 33305 / BD413 / ADP1), this protein is Homoserine O-succinyltransferase.